The sequence spans 434 residues: D-inositol 3-phosphate glycosyltransferase (434 aa).

H26 is a 1D-myo-inositol 3-phosphate binding site. Residues 32-33 (QP) and G40 each bind UDP-N-acetyl-alpha-D-glucosamine. Residues 37 to 42 (DAGGMN), K95, Y128, T152, and R172 each bind 1D-myo-inositol 3-phosphate. 2 residues coordinate UDP-N-acetyl-alpha-D-glucosamine: R246 and K251. Mg(2+) contacts are provided by Y321, R322, and A324. E334 and E342 together coordinate UDP-N-acetyl-alpha-D-glucosamine. T348 is a Mg(2+) binding site.

The protein belongs to the glycosyltransferase group 1 family. MshA subfamily. Homodimer.

It carries out the reaction 1D-myo-inositol 3-phosphate + UDP-N-acetyl-alpha-D-glucosamine = 1D-myo-inositol 2-acetamido-2-deoxy-alpha-D-glucopyranoside 3-phosphate + UDP + H(+). Its function is as follows. Catalyzes the transfer of a N-acetyl-glucosamine moiety to 1D-myo-inositol 3-phosphate to produce 1D-myo-inositol 2-acetamido-2-deoxy-glucopyranoside 3-phosphate in the mycothiol biosynthesis pathway. This chain is D-inositol 3-phosphate glycosyltransferase, found in Thermobifida fusca (strain YX).